The following is a 313-amino-acid chain: Protein FixB (313 aa).

Residue Leu-255–Asp-283 participates in FAD binding.

It belongs to the ETF alpha-subunit/FixB family. As to quaternary structure, heterodimer of FixA and FixB.

The protein operates within amine and polyamine metabolism; carnitine metabolism. Its function is as follows. Required for anaerobic carnitine reduction. May bring reductant to CaiA. The sequence is that of Protein FixB from Escherichia coli O6:K15:H31 (strain 536 / UPEC).